The sequence spans 335 residues: NADH-ubiquinone oxidoreductase chain 2 (335 aa).

Helical transmembrane passes span 7–27 (PTMA…VSSA), 28–48 (NWMF…PIMM), 58–78 (GAVK…MSST), 81–101 (WMTF…AIML), 110–130 (FWYP…LSSW), 147–167 (NMNF…VIGM), 174–194 (TIMA…AAVY), 200–220 (IMYF…MGYL), 240–260 (MALL…GFMP), 274–294 (IILL…LNII), and 315–335 (SLKF…FIML).

This sequence belongs to the complex I subunit 2 family.

The protein resides in the mitochondrion inner membrane. It carries out the reaction a ubiquinone + NADH + 5 H(+)(in) = a ubiquinol + NAD(+) + 4 H(+)(out). Core subunit of the mitochondrial membrane respiratory chain NADH dehydrogenase (Complex I) that is believed to belong to the minimal assembly required for catalysis. Complex I functions in the transfer of electrons from NADH to the respiratory chain. The immediate electron acceptor for the enzyme is believed to be ubiquinone. The polypeptide is NADH-ubiquinone oxidoreductase chain 2 (ND2) (Lumbricus terrestris (Common earthworm)).